The sequence spans 244 residues: 5'-nucleotidase SurE 2 (244 aa).

Asp8, Asp9, Ser39, and Asn96 together coordinate a divalent metal cation.

This sequence belongs to the SurE nucleotidase family. It depends on a divalent metal cation as a cofactor.

The protein resides in the cytoplasm. It carries out the reaction a ribonucleoside 5'-phosphate + H2O = a ribonucleoside + phosphate. Nucleotidase that shows phosphatase activity on nucleoside 5'-monophosphates. In Thermus thermophilus (strain ATCC BAA-163 / DSM 7039 / HB27), this protein is 5'-nucleotidase SurE 2.